Reading from the N-terminus, the 134-residue chain is Profilin-2 (134 aa).

An intrachain disulfide couples C13 to C118. Residues 84–100 (AVIRGKKGSGGITIKKT) carry the Involved in PIP2 interaction motif. T114 carries the post-translational modification Phosphothreonine.

The protein belongs to the profilin family. As to quaternary structure, occurs in many kinds of cells as a complex with monomeric actin in a 1:1 ratio. In terms of processing, phosphorylated by MAP kinases.

The protein resides in the cytoplasm. The protein localises to the cytoskeleton. Binds to actin and affects the structure of the cytoskeleton. At high concentrations, profilin prevents the polymerization of actin, whereas it enhances it at low concentrations. This Olea europaea (Common olive) protein is Profilin-2.